A 385-amino-acid chain; its full sequence is Probable tRNA sulfurtransferase (385 aa).

Positions 57-160 (DGVIERVKKV…RGNAYVFTDK (104 aa)) constitute a THUMP domain. Residues 180–181 (ML), 205–206 (YY), R262, G284, and Q293 each bind ATP.

Belongs to the ThiI family.

The protein localises to the cytoplasm. It carries out the reaction [ThiI sulfur-carrier protein]-S-sulfanyl-L-cysteine + a uridine in tRNA + 2 reduced [2Fe-2S]-[ferredoxin] + ATP + H(+) = [ThiI sulfur-carrier protein]-L-cysteine + a 4-thiouridine in tRNA + 2 oxidized [2Fe-2S]-[ferredoxin] + AMP + diphosphate. The catalysed reaction is [ThiS sulfur-carrier protein]-C-terminal Gly-Gly-AMP + S-sulfanyl-L-cysteinyl-[cysteine desulfurase] + AH2 = [ThiS sulfur-carrier protein]-C-terminal-Gly-aminoethanethioate + L-cysteinyl-[cysteine desulfurase] + A + AMP + 2 H(+). It participates in cofactor biosynthesis; thiamine diphosphate biosynthesis. Its function is as follows. Catalyzes the ATP-dependent transfer of a sulfur to tRNA to produce 4-thiouridine in position 8 of tRNAs, which functions as a near-UV photosensor. Also catalyzes the transfer of sulfur to the sulfur carrier protein ThiS, forming ThiS-thiocarboxylate. This is a step in the synthesis of thiazole, in the thiamine biosynthesis pathway. The sulfur is donated as persulfide by IscS. The chain is Probable tRNA sulfurtransferase from Clostridium perfringens (strain 13 / Type A).